The following is a 283-amino-acid chain: Shikimate dehydrogenase (NADP(+)) (283 aa).

Residues serine 19–serine 21 and threonine 66 each bind shikimate. The active-site Proton acceptor is lysine 70. Glutamate 82 contacts NADP(+). 2 residues coordinate shikimate: asparagine 91 and aspartate 106. Residues glycine 129 to alanine 133 and isoleucine 225 contribute to the NADP(+) site. Residue tyrosine 227 participates in shikimate binding. Position 248 (glycine 248) interacts with NADP(+).

This sequence belongs to the shikimate dehydrogenase family. In terms of assembly, homodimer.

The enzyme catalyses shikimate + NADP(+) = 3-dehydroshikimate + NADPH + H(+). Its pathway is metabolic intermediate biosynthesis; chorismate biosynthesis; chorismate from D-erythrose 4-phosphate and phosphoenolpyruvate: step 4/7. In terms of biological role, involved in the biosynthesis of the chorismate, which leads to the biosynthesis of aromatic amino acids. Catalyzes the reversible NADPH linked reduction of 3-dehydroshikimate (DHSA) to yield shikimate (SA). This is Shikimate dehydrogenase (NADP(+)) from Methanosphaera stadtmanae (strain ATCC 43021 / DSM 3091 / JCM 11832 / MCB-3).